A 163-amino-acid polypeptide reads, in one-letter code: Nucleotide-binding protein HS_0688 (163 aa).

Belongs to the YajQ family.

In terms of biological role, nucleotide-binding protein. This Histophilus somni (strain 129Pt) (Haemophilus somnus) protein is Nucleotide-binding protein HS_0688.